The sequence spans 164 residues: Cyanate hydratase (164 aa).

Catalysis depends on residues Arg90, Glu93, and Ser116.

This sequence belongs to the cyanase family.

The catalysed reaction is cyanate + hydrogencarbonate + 3 H(+) = NH4(+) + 2 CO2. In terms of biological role, catalyzes the reaction of cyanate with bicarbonate to produce ammonia and carbon dioxide. The polypeptide is Cyanate hydratase (Vitis vinifera (Grape)).